A 153-amino-acid chain; its full sequence is Arginine repressor (153 aa).

Belongs to the ArgR family.

The protein localises to the cytoplasm. It functions in the pathway amino-acid biosynthesis; L-arginine biosynthesis [regulation]. Regulates arginine biosynthesis genes. The sequence is that of Arginine repressor from Actinobacillus pleuropneumoniae serotype 7 (strain AP76).